Reading from the N-terminus, the 160-residue chain is Transcriptional regulator MraZ (160 aa).

SpoVT-AbrB domains are found at residues 5–50 (KFDT…GDQV) and 93–136 (AVEC…SQAV).

The protein belongs to the MraZ family. In terms of assembly, forms oligomers.

It localises to the cytoplasm. The protein localises to the nucleoid. The protein is Transcriptional regulator MraZ of Geobacter sp. (strain M21).